The chain runs to 515 residues: Aldehyde dehydrogenase (515 aa).

Residues methionine 1–glycine 12 show a composition bias toward polar residues. A disordered region spans residues methionine 1–glycine 20. Residue glycine 228 to glycine 234 participates in NAD(+) binding. Catalysis depends on residues glutamate 272 and cysteine 311.

It belongs to the aldehyde dehydrogenase family.

It carries out the reaction an aldehyde + NAD(+) + H2O = a carboxylate + NADH + 2 H(+). The protein is Aldehyde dehydrogenase (aldA) of Deinococcus radiodurans (strain ATCC 13939 / DSM 20539 / JCM 16871 / CCUG 27074 / LMG 4051 / NBRC 15346 / NCIMB 9279 / VKM B-1422 / R1).